The following is a 566-amino-acid chain: Berberine bridge enzyme-like D-2 (566 aa).

A signal peptide spans 1–33; it reads MKRNISMSLQRLLIILMMISFLFTSLLVPSVSA. Cys42 and Cys103 form a disulfide bridge. N-linked (GlcNAc...) asparagine glycosylation occurs at Asn50. An FAD-binding PCMH-type domain is found at 81–257; sequence SKPKPTVIIV…YAWKIRLLKV (177 aa). His118 carries the post-translational modification Pros-8alpha-FAD histidine. N-linked (GlcNAc...) asparagine glycans are attached at residues Asn364, Asn378, and Asn503.

Belongs to the oxygen-dependent FAD-linked oxidoreductase family. FAD serves as cofactor.

It localises to the vacuole. It participates in alkaloid biosynthesis; nicotine biosynthesis. Its function is as follows. Involved in the biosynthesis of pyridine alkaloid natural products, leading mainly to the production of anabasine, anatabine, nicotine and nornicotine, effective deterrents against herbivores with antiparasitic and pesticide properties (neurotoxins); nornicotine serves as the precursor in the synthesis of the carcinogen compound N'-nitrosonornicotine (NNN). Catalyzes a late oxidation step subsequent to the pyridine ring condensation reaction in the biosynthesis of alkaloids. The sequence is that of Berberine bridge enzyme-like D-2 from Nicotiana tabacum (Common tobacco).